The following is a 500-amino-acid chain: Histidine ammonia-lyase (500 aa).

A cross-link (5-imidazolinone (Ala-Gly)) is located at residues 141–143; the sequence is ASG. At Ser-142 the chain carries 2,3-didehydroalanine (Ser).

The protein belongs to the PAL/histidase family. Contains an active site 4-methylidene-imidazol-5-one (MIO), which is formed autocatalytically by cyclization and dehydration of residues Ala-Ser-Gly.

It is found in the cytoplasm. It carries out the reaction L-histidine = trans-urocanate + NH4(+). Its pathway is amino-acid degradation; L-histidine degradation into L-glutamate; N-formimidoyl-L-glutamate from L-histidine: step 1/3. In Shouchella clausii (strain KSM-K16) (Alkalihalobacillus clausii), this protein is Histidine ammonia-lyase.